Reading from the N-terminus, the 258-residue chain is Polysialic acid transport protein KpsM (258 aa).

Over 1-30 the chain is Cytoplasmic; that stretch reads MARSGFEVQKVTVEALFLREIRTRFGKFRL. The ABC transmembrane type-2 domain occupies 30-251; that stretch reads LGYLWAILEP…FIGLALYRTR (222 aa). The chain crosses the membrane as a helical span at residues 31-54; it reads GYLWAILEPSAHLLILLGILGYVM. The Periplasmic segment spans residues 55–61; sequence HRTMPDI. Residues 62 to 81 traverse the membrane as a helical segment; the sequence is SFPVFLLNGLIPFFIFSSIS. Residues 82 to 108 are Cytoplasmic-facing; sequence KRSIGAIEANQGLFNYRPVKPIDTIIA. A helical membrane pass occupies residues 109–132; the sequence is RALLETLIYVAVYILLMLIVWMTG. The Periplasmic portion of the chain corresponds to 133 to 143; sequence EYFEITNFLQL. The helical transmembrane segment at 144–165 threads the bilayer; that stretch reads VLTWSLLIILSCGVGLIFMVVG. Residues 166–174 are Cytoplasmic-facing; that stretch reads KTFPEMQKV. Residues 175 to 195 form a helical membrane-spanning segment; it reads LPILLKPLYFISCIMFPLHSI. Topologically, residues 196-226 are periplasmic; sequence PKQYWSYLLWNPLVHVVELSREAVMPGYISE. A helical transmembrane segment spans residues 227–247; the sequence is GVSLNYLAMFTLVTLFIGLAL. The Cytoplasmic portion of the chain corresponds to 248 to 258; sequence YRTREEAMLTS.

This sequence belongs to the ABC-2 integral membrane protein family.

Its subcellular location is the cell inner membrane. KpsM and KpsT constitute a system for the transport of polysialic acid across the cytoplasmic membrane. This Escherichia coli protein is Polysialic acid transport protein KpsM (kpsM).